We begin with the raw amino-acid sequence, 456 residues long: 26S proteasome non-ATPase regulatory subunit 12 (456 aa).

Ala-2 carries the N-acetylalanine modification. Residue Lys-92 forms a Glycyl lysine isopeptide (Lys-Gly) (interchain with G-Cter in SUMO1); alternate linkage. A Glycyl lysine isopeptide (Lys-Gly) (interchain with G-Cter in SUMO2); alternate cross-link involves residue Lys-92. Lys-221 and Lys-368 each carry N6-acetyllysine. In terms of domain architecture, PCI spans 242–420; sequence SICKHYRAIY…GIINFQRPKD (179 aa).

Belongs to the proteasome subunit p55 family. As to quaternary structure, component of the 19S proteasome regulatory particle complex. The 26S proteasome consists of a 20S core particle (CP) and two 19S regulatory subunits (RP). The regulatory particle is made of a lid composed of 9 subunits including PSMD12, a base containing 6 ATPases and few additional components. Interacts with ERCC6.

Component of the 26S proteasome, a multiprotein complex involved in the ATP-dependent degradation of ubiquitinated proteins. This complex plays a key role in the maintenance of protein homeostasis by removing misfolded or damaged proteins, which could impair cellular functions, and by removing proteins whose functions are no longer required. Therefore, the proteasome participates in numerous cellular processes, including cell cycle progression, apoptosis, or DNA damage repair. This Homo sapiens (Human) protein is 26S proteasome non-ATPase regulatory subunit 12 (PSMD12).